A 173-amino-acid chain; its full sequence is Superoxide dismutase [Cu-Zn] (173 aa).

Residues 1-19 (MKRFSLAILALVVATGAQA) form the signal peptide. Cu cation is bound by residues H67, H69, and H92. Residues 72–113 (GSCQPATKDGKASAAESAGGHLDPQNTGKHEGPEGAGHLGDL) are disordered. C74 and C169 form a disulfide bridge. Residues H92, H101, H109, and D112 each coordinate Zn(2+). H147 serves as a coordination point for Cu cation.

It belongs to the Cu-Zn superoxide dismutase family. In terms of assembly, monomer. Cu cation serves as cofactor. Zn(2+) is required as a cofactor.

It is found in the periplasm. The catalysed reaction is 2 superoxide + 2 H(+) = H2O2 + O2. Functionally, destroys radicals which are normally produced within the cells and which are toxic to biological systems. This chain is Superoxide dismutase [Cu-Zn] (sodC), found in Escherichia coli O157:H7.